The chain runs to 131 residues: UPF0102 protein YraN (131 aa).

Polar residues predominate over residues 1 to 19 (MATVPTRSGSPRQLTTKQT). The interval 1 to 20 (MATVPTRSGSPRQLTTKQTG) is disordered.

The protein belongs to the UPF0102 family.

In Escherichia coli O17:K52:H18 (strain UMN026 / ExPEC), this protein is UPF0102 protein YraN.